The chain runs to 422 residues: Probable biofilm formation methyltransferase WspC (422 aa).

The CheR-type methyltransferase domain maps to methionine 1–glutamate 264. S-adenosyl-L-methionine contacts are provided by residues threonine 67, arginine 71, glutamate 108, aspartate 132, asparagine 186–leucine 187, and arginine 205–asparagine 206. The disordered stretch occupies residues alanine 289 to proline 316. A TPR repeat occupies alanine 354–histidine 387.

In terms of assembly, monomer.

Functionally, involved in biofilm formation. This is Probable biofilm formation methyltransferase WspC (wspC) from Pseudomonas aeruginosa (strain ATCC 15692 / DSM 22644 / CIP 104116 / JCM 14847 / LMG 12228 / 1C / PRS 101 / PAO1).